The following is a 521-amino-acid chain: Tigger transposable element-derived protein 6 (521 aa).

An HTH psq-type domain is found at 3-54 (NKGNKKRRQFSLEEKMKVVGAVDSGKRKGDVAKEFGITPSTLSTFLKDRTKF). 2 consecutive DNA-binding regions (H-T-H motif) follow at residues 30–50 (KGDV…FLKD) and 99–130 (SVIR…FRDR). Residues 66 to 137 (QRKRMRSALY…RDRHGIALKA (72 aa)) form the HTH CENPB-type domain. One can recognise a DDE-1 domain in the interval 170-372 (YSPDDIFNAD…VKPSTVVKCW (203 aa)).

Belongs to the tigger transposable element derived protein family.

The protein resides in the nucleus. This is Tigger transposable element-derived protein 6 (TIGD6) from Homo sapiens (Human).